We begin with the raw amino-acid sequence, 300 residues long: E3 ubiquitin-protein ligase RNF212B (300 aa).

Residues 6-40 (CNQCFRKDGAHFFVTSCGHIFCKKCVTLEKCAVCG) form an RING-type zinc finger. A coiled-coil region spans residues 88 to 124 (LIAFYKHRITKLETAMQETQQALVSQDKELSVLRKEN). 2 disordered regions span residues 141–251 (YQGS…HTRV) and 280–300 (PYQQ…TTSR). A compositionally biased stretch (polar residues) spans 155–169 (TSPSQSVTPRPSFQH). Residues 170-183 (SSQVVSRSSSVESV) are compositionally biased toward low complexity. Residues 191–200 (GSLGQGGRGL) are compositionally biased toward gly residues. The span at 211 to 234 (NETPSPASTHSLSYRPSSASSGQG) shows a compositional bias: polar residues.

In terms of assembly, homodimer. Autoubiquitinated.

Its subcellular location is the chromosome. It carries out the reaction S-ubiquitinyl-[E2 ubiquitin-conjugating enzyme]-L-cysteine + [acceptor protein]-L-lysine = [E2 ubiquitin-conjugating enzyme]-L-cysteine + N(6)-ubiquitinyl-[acceptor protein]-L-lysine.. Its pathway is protein modification; protein ubiquitination. Ubiquitin E3 ligase that acts as a crucial factor for crossing-over (CO) formation during meiosis. Essential for normal prophase I progression and for ensuring appropriate CO designation in meiosis. Recruits key components of the cross-over machinery either directly ou indirectly, leading to the activation of the MutL-gamma complex. The function of RNF212B in CO designation is dependent on its catalytic activity. This Pongo abelii (Sumatran orangutan) protein is E3 ubiquitin-protein ligase RNF212B (RNF212B).